Here is a 353-residue protein sequence, read N- to C-terminus: Protein RecA (353 aa).

64-71 (GPESSGKT) contributes to the ATP binding site. Positions 331–353 (LEEASAQKEEVPVEDKLFDDELE) are disordered. The segment covering 335–346 (SAQKEEVPVEDK) has biased composition (basic and acidic residues).

This sequence belongs to the RecA family.

It is found in the cytoplasm. Functionally, can catalyze the hydrolysis of ATP in the presence of single-stranded DNA, the ATP-dependent uptake of single-stranded DNA by duplex DNA, and the ATP-dependent hybridization of homologous single-stranded DNAs. It interacts with LexA causing its activation and leading to its autocatalytic cleavage. The protein is Protein RecA of Macrococcus caseolyticus (strain JCSC5402) (Macrococcoides caseolyticum).